The sequence spans 843 residues: RNA-binding protein 25 (843 aa).

The disordered stretch occupies residues 1-30 (MSFPPHLNRPPMGIPALPPGIPPPQFPGFP). Residues 12–30 (MGIPALPPGIPPPQFPGFP) are compositionally biased toward pro residues. Residues 87 to 164 (TTVFVGNISE…KKLLVKVDAK (78 aa)) enclose the RRM domain. Lysine 135 bears the N6-acetyllysine mark. Disordered stretches follow at residues 171-202 (EWKA…ETKR) and 219-243 (SSEL…KKED). Residues serine 226 and serine 229 each carry the phosphoserine modification. Residues lysine 261, lysine 273, and lysine 430 each participate in a glycyl lysine isopeptide (Lys-Gly) (interchain with G-Cter in SUMO2) cross-link. Basic and acidic residues-rich tracts occupy residues 280 to 433 (EISK…KRDR) and 521 to 573 (RLRD…ERRR). 2 disordered regions span residues 280–442 (EISK…DAYE) and 498–688 (EFLE…KRKK). The segment at 285-644 (RDTHKKLEEE…PNTPGDESPC (360 aa)) is necessary for nuclear speckle localization. Lysine 578 is covalently cross-linked (Glycyl lysine isopeptide (Lys-Gly) (interchain with G-Cter in SUMO2)). Serine 583 bears the Phosphoserine mark. Residues 590-599 (KQEKEEKREE) are compositionally biased toward basic and acidic residues. Positions 621-630 (SSAPSVSSAS) are enriched in low complexity. A Glycyl lysine isopeptide (Lys-Gly) (interchain with G-Cter in SUMO2) cross-link involves residue lysine 671. A compositionally biased stretch (polar residues) spans 674–683 (ASNSPGQPNS). Phosphoserine is present on residues serine 677 and serine 683. Residues lysine 688 and lysine 697 each participate in a glycyl lysine isopeptide (Lys-Gly) (interchain with G-Cter in SUMO2) cross-link. Serine 703 carries the phosphoserine modification. A Glycyl lysine isopeptide (Lys-Gly) (interchain with G-Cter in SUMO2) cross-link involves residue lysine 722. Positions 750 to 843 (PELFAYPLDW…TEAKKIGLVK (94 aa)) constitute a PWI domain.

Interacts with LUC7L3 and SRRM1. Specifically associates with functional splicing complexes, including Sm proteins and U1, U2, U4, U5 and U6 snRNAs. Associates with exon junction complex (EJC) proteins, including APEX1, DDX39B, NCBP1, RBM8A and RNPS1. Interaction with NCBP1 is RNA-dependent. Post-translationally, sumoylated.

Its subcellular location is the nucleus speckle. It is found in the cytoplasm. Its function is as follows. RNA-binding protein that acts as a regulator of alternative pre-mRNA splicing. Involved in apoptotic cell death through the regulation of the apoptotic factor BCL2L1 isoform expression. Modulates the ratio of proapoptotic BCL2L1 isoform S to antiapoptotic BCL2L1 isoform L mRNA expression. When overexpressed, stimulates proapoptotic BCL2L1 isoform S 5'-splice site (5'-ss) selection, whereas its depletion caused the accumulation of antiapoptotic BCL2L1 isoform L. Promotes BCL2L1 isoform S 5'-ss usage through the 5'-CGGGCA-3' RNA sequence. Its association with LUC7L3 promotes U1 snRNP binding to a weak 5' ss in a 5'-CGGGCA-3'-dependent manner. Binds to the exonic splicing enhancer 5'-CGGGCA-3' RNA sequence located within exon 2 of the BCL2L1 pre-mRNA. Also involved in the generation of an abnormal and truncated splice form of SCN5A in heart failure. This is RNA-binding protein 25 (RBM25) from Homo sapiens (Human).